A 360-amino-acid polypeptide reads, in one-letter code: Iron uptake protein A1 (360 aa).

The signal sequence occupies residues 1–28; sequence MVQKLSRRLFLSIGTAFTVVVGSQLLSS. Cysteine 29 is lipidated: N-palmitoyl cysteine. The S-diacylglycerol cysteine moiety is linked to residue cysteine 29. Residues histidine 54, tyrosine 55, tyrosine 185, tyrosine 241, and tyrosine 242 each contribute to the Fe cation site.

It belongs to the bacterial solute-binding protein 1 family.

The protein resides in the cellular thylakoid membrane. Its subcellular location is the cell membrane. Its function is as follows. Plays an important role in protecting the acceptor side of photosystem II (PSII) against oxidative damage, especially under iron-limiting growth conditions. The differing subcellular locations of futA1 (predominantly thylakoid lumen) and futA2 (predominantly periplasmic) suggest they may fulfill different roles. A major iron-binding protein involved in Fe(3+) uptake, probably part of a periplasmic ABC transporter complex futA1A2BC (TC 3.A.1.10.2) involved in Fe(3+) ion import (ferric iron). This protein and futA2 (slr0531) may be subunit proteins that have redundant or overlapping substrate-binding functions. This Synechocystis sp. (strain ATCC 27184 / PCC 6803 / Kazusa) protein is Iron uptake protein A1 (futA1).